The chain runs to 95 residues: Co-chaperonin GroES (95 aa).

The protein belongs to the GroES chaperonin family. As to quaternary structure, heptamer of 7 subunits arranged in a ring. Interacts with the chaperonin GroEL.

The protein resides in the cytoplasm. Its function is as follows. Together with the chaperonin GroEL, plays an essential role in assisting protein folding. The GroEL-GroES system forms a nano-cage that allows encapsulation of the non-native substrate proteins and provides a physical environment optimized to promote and accelerate protein folding. GroES binds to the apical surface of the GroEL ring, thereby capping the opening of the GroEL channel. In Rickettsia conorii (strain ATCC VR-613 / Malish 7), this protein is Co-chaperonin GroES.